Consider the following 648-residue polypeptide: Beta-glucuronidase (648 aa).

The signal sequence occupies residues 1–19 (GLAMAWAVLGPLLWGCALA). N-linked (GlcNAc...) asparagine glycans are attached at residues Asn170, Asn269, and Asn417. The Proton donor role is filled by Glu448. Asn628 carries an N-linked (GlcNAc...) asparagine glycan.

This sequence belongs to the glycosyl hydrolase 2 family. In terms of assembly, homotetramer.

It localises to the lysosome. It carries out the reaction a beta-D-glucuronoside + H2O = D-glucuronate + an alcohol. Inhibited by L-aspartic acid. Its function is as follows. Plays an important role in the degradation of dermatan and keratan sulfates. The protein is Beta-glucuronidase (GUSB) of Chlorocebus aethiops (Green monkey).